Here is a 192-residue protein sequence, read N- to C-terminus: FMN-dependent NADH:quinone oxidoreductase 1 (192 aa).

Residues serine 9 and 15-17 (SYS) contribute to the FMN site.

The protein belongs to the azoreductase type 1 family. As to quaternary structure, homodimer. Requires FMN as cofactor.

The catalysed reaction is 2 a quinone + NADH + H(+) = 2 a 1,4-benzosemiquinone + NAD(+). It catalyses the reaction N,N-dimethyl-1,4-phenylenediamine + anthranilate + 2 NAD(+) = 2-(4-dimethylaminophenyl)diazenylbenzoate + 2 NADH + 2 H(+). Quinone reductase that provides resistance to thiol-specific stress caused by electrophilic quinones. Functionally, also exhibits azoreductase activity. Catalyzes the reductive cleavage of the azo bond in aromatic azo compounds to the corresponding amines. This Colwellia psychrerythraea (strain 34H / ATCC BAA-681) (Vibrio psychroerythus) protein is FMN-dependent NADH:quinone oxidoreductase 1.